Here is a 499-residue protein sequence, read N- to C-terminus: Acetylcholine receptor subunit alpha-type acr-16 (499 aa).

Residues 1-19 (MSSVCALLLSCALFLVAHG) form the signal peptide. At 20-232 (SLQERRLYED…LHMRRRTLYY (213 aa)) the chain is on the extracellular side. N-linked (GlcNAc...) asparagine glycosylation is found at asparagine 43 and asparagine 93. 2 disulfide bridges follow: cysteine 147-cysteine 161 and cysteine 211-cysteine 212. Helical transmembrane passes span 233–253 (GFNL…GFTL), 261–281 (ITLQ…VSEM), and 289–309 (VPLL…STVF). Over 310 to 473 (TVYVLNLHYR…WKFAAMVVDR (164 aa)) the chain is Cytoplasmic. The chain crosses the membrane as a helical span at residues 474-494 (LCLYVFTIFIIASTIGIFWSA). The Extracellular portion of the chain corresponds to 495–499 (PYLVA).

This sequence belongs to the ligand-gated ion channel (TC 1.A.9) family. Acetylcholine receptor (TC 1.A.9.1) subfamily.

The protein resides in the postsynaptic cell membrane. It is found in the cell membrane. After binding acetylcholine, the AChR responds by an extensive change in conformation that affects all subunits and leads to opening of an ion-conducting channel across the plasma membrane. A subunit of the levamisole-insensitive nicotinic receptor. This is Acetylcholine receptor subunit alpha-type acr-16 from Caenorhabditis briggsae.